A 236-amino-acid polypeptide reads, in one-letter code: Probable calcium-binding protein CML30 (236 aa).

The segment at Val43 to Leu64 is disordered. Residues Lys49–Pro60 are compositionally biased toward basic and acidic residues. 2 consecutive EF-hand domains span residues Asp59–Ala94 and Ser96–Arg131. Ca(2+)-binding residues include Asp72, Asp74, Asp76, Glu83, Asp109, Asn111, Asp113, and Glu120. The interval Lys130 to Glu158 is disordered. Acidic residues predominate over residues Ala146–Glu158. EF-hand domains are found at residues Glu161–Arg196 and Pro202–Ala236. Ca(2+)-binding residues include Asp174, Asn176, Asp178, Glu185, Asp215, Asp217, Asp219, Met221, and Glu226.

Functionally, potential calcium sensor. The sequence is that of Probable calcium-binding protein CML30 (CML30) from Oryza sativa subsp. japonica (Rice).